The following is a 144-amino-acid chain: Conopressin-conophysin (144 aa).

The first 27 residues, 1–27, serve as a signal peptide directing secretion; it reads MTRSALQMGRLTLVLCLLLQLVLVTQA. An intrachain disulfide couples Cys-28 to Cys-33. Asp-36 is modified (aspartic acid 1-amide). Residues 37-44 constitute a propeptide that is removed on maturation; the sequence is GERDVDGR. Intrachain disulfides connect Cys-50-Cys-90, Cys-53-Cys-64, Cys-58-Cys-80, Cys-65-Cys-70, Cys-97-Cys-117, Cys-109-Cys-129, and Cys-118-Cys-123. A propeptide spanning residues 131–144 is cleaved from the precursor; the sequence is KESKSGIRVGCQRS.

This sequence belongs to the vasopressin/oxytocin family. Expressed by the venom duct.

It localises to the secreted. This is Conopressin-conophysin from Conus bayani (Bayan's cone).